Reading from the N-terminus, the 192-residue chain is 7-methyl-GTP pyrophosphatase (192 aa).

Aspartate 69 serves as the catalytic Proton acceptor.

The protein belongs to the Maf family. YceF subfamily. A divalent metal cation is required as a cofactor.

The protein localises to the cytoplasm. The catalysed reaction is N(7)-methyl-GTP + H2O = N(7)-methyl-GMP + diphosphate + H(+). Its function is as follows. Nucleoside triphosphate pyrophosphatase that hydrolyzes 7-methyl-GTP (m(7)GTP). May have a dual role in cell division arrest and in preventing the incorporation of modified nucleotides into cellular nucleic acids. This Pseudomonas syringae pv. tomato (strain ATCC BAA-871 / DC3000) protein is 7-methyl-GTP pyrophosphatase (maf-1).